The primary structure comprises 29 residues: Glucagon (29 aa).

It belongs to the glucagon family.

Its subcellular location is the secreted. Promotes hydrolysis of glycogen and lipids, and raises the blood sugar level. The chain is Glucagon (gcg) from Torpedo marmorata (Marbled electric ray).